The chain runs to 109 residues: Biphenyl dioxygenase ferredoxin subunit (109 aa).

Positions 4–100 constitute a Rieske domain; that stretch reads TKACSVDEVP…IRIEGRDVLV (97 aa). Residues Cys43, His45, Cys63, and His66 each coordinate [2Fe-2S] cluster.

It belongs to the bacterial ring-hydroxylating dioxygenase ferredoxin component family. As to quaternary structure, this dioxygenase system consists of four proteins: the two subunits of the hydroxylase component (BphA1 and BphA2), a ferredoxin (BphA3) and a ferredoxin reductase (BphA4).

This protein seems to be a 2Fe-2S ferredoxin. In Pseudomonas sp. (strain KKS102), this protein is Biphenyl dioxygenase ferredoxin subunit (bphA3).